The chain runs to 305 residues: Phosphoribosylaminoimidazole-succinocarboxamide synthase (305 aa).

It belongs to the SAICAR synthetase family.

The enzyme catalyses 5-amino-1-(5-phospho-D-ribosyl)imidazole-4-carboxylate + L-aspartate + ATP = (2S)-2-[5-amino-1-(5-phospho-beta-D-ribosyl)imidazole-4-carboxamido]succinate + ADP + phosphate + 2 H(+). It participates in purine metabolism; IMP biosynthesis via de novo pathway; 5-amino-1-(5-phospho-D-ribosyl)imidazole-4-carboxamide from 5-amino-1-(5-phospho-D-ribosyl)imidazole-4-carboxylate: step 1/2. The protein is Phosphoribosylaminoimidazole-succinocarboxamide synthase of Albidiferax ferrireducens (strain ATCC BAA-621 / DSM 15236 / T118) (Rhodoferax ferrireducens).